A 3010-amino-acid chain; its full sequence is Genome polyprotein (3010 aa).

Ser2 carries the N-acetylserine; by host modification. An interaction with STAT1 region spans residues 2–23; the sequence is STNPKPQRKTKRNTNRRPQDVK. The segment at 2-58 is interaction with EIF2AK2/PKR; the sequence is STNPKPQRKTKRNTNRRPQDVKFPGGGQIVGGVYLLPRRGPRLGVRATRKASERSQP. Residues 2-59 are interaction with DDX3X; the sequence is STNPKPQRKTKRNTNRRPQDVKFPGGGQIVGGVYLLPRRGPRLGVRATRKASERSQPR. A disordered region spans residues 2-75; it reads STNPKPQRKT…PKARRPEGRA (74 aa). Residues 2-168 are Cytoplasmic-facing; the sequence is STNPKPQRKT…EDGVNYATGN (167 aa). 2 consecutive short sequence motifs (nuclear localization signal) follow at residues 5 to 13 and 38 to 43; these read PKPQRKTKR and PRRGPR. Residues 7–16 are compositionally biased toward basic residues; that stretch reads PQRKTKRNTN. The segment covering 32–47 has biased composition (low complexity); the sequence is GGVYLLPRRGPRLGVR. A Phosphoserine; by host modification is found at Ser53. 2 short sequence motifs (nuclear localization signal) span residues 58–64 and 66–71; these read PRGRRQP and PKARRP. Over residues 58-68 the composition is skewed to basic residues; it reads PRGRRQPIPKA. The residue at position 99 (Ser99) is a Phosphoserine; by host. Positions 112 to 152 are important for endoplasmic reticulum and mitochondrial localization; the sequence is PRRRSRNLGKVIDTLTCGFADLMGYIPLVGAPLGGAARALA. A Phosphoserine; by host PKA modification is found at Ser116. Residues 122-173 form an interaction with APOA2 region; the sequence is VIDTLTCGFADLMGYIPLVGAPLGGAARALAHGVRVLEDGVNYATGNLPGCS. The tract at residues 164–167 is important for lipid droplets localization; the sequence is YATG. The helical transmembrane segment at 169–189 threads the bilayer; sequence LPGCSFSIFLLALLSCLTIPA. Positions 178–191 are cleaved as a propeptide — ER anchor for the core protein, removed in mature form by host signal peptidase; that stretch reads LLALLSCLTIPASA. Residues 190–358 lie on the Lumenal side of the membrane; the sequence is SAYEVRNVSG…AGAHWGVLAG (169 aa). 4 N-linked (GlcNAc...) asparagine; by host glycosylation sites follow: Asn196, Asn209, Asn234, and Asn250. The segment at 265-296 is important for fusion; sequence LVGTAAFCSAMYVGDLCGSIFLVSQLFTFSPR. An N-linked (GlcNAc...) asparagine; by host glycan is attached at Asn305. A helical membrane pass occupies residues 359-379; it reads LAYYSMVGNWAKVLIVALLFA. Over 380–725 the chain is Lumenal; the sequence is GVDGETHTTG…WEYILLLFLL (346 aa). The tract at residues 385 to 411 is HVR1; that stretch reads THTTGRVAGHTTSGFTSLFSSGASQKI. 4 N-linked (GlcNAc...) (high mannose) asparagine; by host glycosylation sites follow: Asn417, Asn423, Asn430, and Asn448. Disulfide bonds link Cys429–Cys552, Cys452–Cys459, Cys486–Cys494, and Cys503–Cys508. The interval 474-479 is HVR2; sequence YTKPNS. N-linked (GlcNAc...) asparagine; by host glycosylation is present at Asn478. The interval 480–493 is CD81-binding 1; it reads SDQRPYCWHYAPRP. The N-linked (GlcNAc...) (high mannose) asparagine; by host glycan is linked to Asn532. Asn540 carries N-linked (GlcNAc...) asparagine; by host glycosylation. The interval 544–551 is CD81-binding 2; the sequence is PPQGNWFG. N-linked (GlcNAc...) (high mannose) asparagine; by host glycosylation occurs at Asn556. Cys564 and Cys569 are oxidised to a cystine. An N-linked (GlcNAc...) (high mannose) asparagine; by host glycan is attached at Asn576. Cystine bridges form between Cys581/Cys585, Cys597/Cys620, and Cys607/Cys644. N-linked (GlcNAc...) (high mannose) asparagine; by host glycans are attached at residues Asn623 and Asn645. Cysteines 652 and 677 form a disulfide. The interval 660–671 is PKR/eIF2-alpha phosphorylation homology domain (PePHD); it reads SELSPLLLSTTE. Residues 726-746 traverse the membrane as a helical segment; sequence LADARVCACLWMMLLIAQAEA. Topologically, residues 747-757 are lumenal; the sequence is ALENLVVLNAA. The chain crosses the membrane as a helical span at residues 758-778; that stretch reads SVAGAHGILSFLVFFCAAWYI. Topologically, residues 779–781 are cytoplasmic; sequence KGR. The chain crosses the membrane as a helical span at residues 782-803; sequence LAPGAAYAFYGVWPLLLLLLAL. The Lumenal portion of the chain corresponds to 804–813; sequence PPRAYALDRE. Residues 814 to 834 traverse the membrane as a helical segment; it reads MAASCGGAVLVGLVFLTLSPY. At 835-838 the chain is on the cytoplasmic side; it reads YKVF. Residues 839–859 form a helical membrane-spanning segment; it reads LTRLIWWLQYFITRAEAHMQV. Residues 860-881 are Lumenal-facing; the sequence is WVPPLNVRGGRDAIILLTCAVH. Residues 882–902 form a helical membrane-spanning segment; it reads PELIFDITKLLLAILGPLMVL. In terms of domain architecture, Peptidase C18 spans 903 to 1026; it reads QAGITRVPYF…SLEGQGWRLL (124 aa). Topologically, residues 903-1657 are cytoplasmic; that stretch reads QAGITRVPYF…CMSADLEVVT (755 aa). The tract at residues 904–1206 is protease NS2-3; the sequence is AGITRVPYFV…PVESMETTMR (303 aa). Residue Cys922 is the site of S-palmitoyl cysteine; by host attachment. Residues 929 to 949 are interaction with host SCPS1; it reads AGGHYVQMAFMKLGALTGTYV. Active-site for protease NS2 activity; shared with dimeric partner residues include His952, Glu972, and Cys993. The region spanning 1027–1208 is the Peptidase S29 domain; sequence APITAYSQQT…ESMETTMRSP (182 aa). Active-site charge relay system; for serine protease NS3 activity residues include His1083 and Asp1107. Zn(2+)-binding residues include Cys1123 and Cys1125. Ser1165 functions as the Charge relay system; for serine protease NS3 activity in the catalytic mechanism. Zn(2+) contacts are provided by Cys1171 and His1175. Residues 1217-1369 form the Helicase ATP-binding domain; the sequence is PAVPQTFQVA…PNIEEIGLSN (153 aa). 1230 to 1237 contacts ATP; sequence APTGSGKS. 2 residues coordinate Mg(2+): Ser1237 and Glu1317. The short motif at 1316 to 1319 is the DECH box element; sequence DECH. The interval 1486–1497 is RNA-binding; sequence QRRGRTGRGRSG. The helical transmembrane segment at 1658 to 1678 threads the bilayer; that stretch reads STWVLVGGVLAALAAYCLTTG. The NS3-binding stretch occupies residues 1679–1690; the sequence is SVVIVGRIILSG. The Cytoplasmic segment spans residues 1679–1805; the sequence is SVVIVGRIIL…SITSPLTTQN (127 aa). Residues 1806–1824 form a helical membrane-spanning segment; it reads TLLFNILGGWVAAQLAPPS. The Lumenal portion of the chain corresponds to 1825–1828; that stretch reads AASA. Residues 1829–1849 form a helical membrane-spanning segment; the sequence is FVGAGIAGAAVGSIGLGKVLV. Position 1850 (Asp1850) is a topological domain, cytoplasmic. A helical membrane pass occupies residues 1851-1871; the sequence is ILAGYGAGVAGALVAFKVMSG. Over 1872–1881 the chain is Lumenal; sequence EVPSTEDLVN. A helical membrane pass occupies residues 1882 to 1902; sequence LLPAILSPGALVVGVVCAAIL. Topologically, residues 1903-1972 are cytoplasmic; that stretch reads RRHVGPGEGA…WINEDCSTPC (70 aa). S-palmitoyl cysteine; by host attachment occurs at residues Cys1968 and Cys1972. The stretch at 1973–2002 is an intramembrane region; it reads SGSWLRDVWDWICTVLTDFKTWLQSKLLPR. Topologically, residues 2003–2989 are cytoplasmic; that stretch reads LPGVPFLSCQ…YHSLSRARPR (987 aa). Residues Cys2011, Cys2029, Cys2031, and Cys2052 each coordinate Zn(2+). The FKBP8-binding stretch occupies residues 2120–2208; it reads EFFTEVDGVR…ASSSASQLSA (89 aa). The tract at residues 2120-2332 is transcriptional activation; it reads EFFTEVDGVR…PIPPPRRKRT (213 aa). The segment at 2135–2139 is interaction with non-structural protein 4A; it reads PACKP. The interval 2187-2219 is disordered; it reads KRRLARGSPPSLASSSASQLSAPSLKATCTTHH. The interval 2189–2441 is interaction with host SKP2; sequence RLARGSPPSL…PCAAEESKLP (253 aa). Ser2194 bears the Phosphoserine; by host; in p56 mark. Positions 2194–2211 are enriched in low complexity; it reads SPPSLASSSASQLSAPSL. Ser2197, Ser2201, Ser2204, Ser2207, and Ser2210 each carry phosphoserine; by host; in p58. Residues 2210–2249 are ISDR; that stretch reads SLKATCTTHHDSPDADLIEANLLWRQEMGGNITRVESENK. The interval 2210 to 2275 is interaction with EIF2AK2/PKR; it reads SLKATCTTHH…REISVAAEIL (66 aa). The tract at residues 2249-2306 is NS4B-binding; it reads KVVILDSFEPLHAEGDEREISVAAEILRKSRKFPSALPIWARPDYNPPLLESWKDPDY. Residues 2322 to 2325 carry the SH3-binding motif; the sequence is PPIP. Residues 2326–2334 carry the Nuclear localization signal motif; it reads PPRRKRTVV. Residue Lys2350 forms a Glycyl lysine isopeptide (Lys-Gly) (interchain with G-Cter in ubiquitin) linkage. Residues 2351 to 2365 show a composition bias toward polar residues; that stretch reads TFGSSGSSAVDSGTA. Residues 2351–2407 are disordered; it reads TFGSSGSSAVDSGTATALPDLASDDGDKGSDVESYSSMPPLEGEPGDPDLSDGSWST. The V3 stretch occupies residues 2354 to 2377; that stretch reads SSGSSAVDSGTATALPDLASDDGD. A phosphoserine; by host mark is found at Ser2448 and Ser2461. The region spanning 2633–2751 is the RdRp catalytic domain; it reads PMGFSYDTRC…ICESAGTQED (119 aa). 3 residues coordinate Mg(2+): Asp2639, Asp2737, and Asp2738. The chain crosses the membrane as a helical span at residues 2990–3010; sequence WFPLCLLLLSVGVGIYLLPNR.

This sequence belongs to the hepacivirus polyprotein family. As to quaternary structure, homooligomer. Interacts with E1 (via C-terminus). Interacts with the non-structural protein 5A. Interacts (via N-terminus) with host STAT1 (via SH2 domain); this interaction results in decreased STAT1 phosphorylation and ubiquitin-mediated proteasome-dependent STAT1 degradation, leading to decreased IFN-stimulated gene transcription. Interacts with host STAT3; this interaction constitutively activates STAT3. Interacts with host LTBR receptor. Interacts with host TNFRSF1A receptor and possibly induces apoptosis. Interacts with host HNRPK. Interacts with host YWHAE. Interacts with host UBE3A/E6AP. Interacts with host DDX3X. Interacts with host APOA2. Interacts with host RXRA protein. Interacts with host SP110 isoform 3/Sp110b; this interaction sequesters the transcriptional corepressor SP110 away from the nucleus. Interacts with host CREB3 nuclear transcription protein; this interaction triggers cell transformation. Interacts with host ACY3. Interacts with host C1QR1. Interacts with host RBM24; this interaction, which enhances the interaction of the mature core protein with 5'-UTR, may inhibit viral translation and favor replication. Interacts with host EIF2AK2/PKR; this interaction induces the autophosphorylation of EIF2AK2. Part of the viral assembly initiation complex composed of NS2, E1, E2, NS3, NS4A, NS5A and the mature core protein. In terms of assembly, forms a heterodimer with envelope glycoprotein E2. Interacts with mature core protein. Interacts with protease NS2. The heterodimer E1/E2 interacts with host CLDN1; this interaction plays a role in viral entry into host cell. Interacts with host SPSB2 (via C-terminus). Part of the viral assembly initiation complex composed of NS2, E1, E2, NS3, NS4A, NS5A and the mature core protein. Interacts with host NEURL3; this interaction prevents E1 binding to glycoprotein E2. Forms a heterodimer with envelope glycoprotein E1. Interacts with host CD81 and SCARB1 receptors; these interactions play a role in viral entry into host cell. Interacts with host EIF2AK2/PKR; this interaction inhibits EIF2AK2 and probably allows the virus to evade the innate immune response. Interacts with host CD209/DC-SIGN and CLEC4M/DC-SIGNR. Interact with host SPCS1; this interaction is essential for viral particle assembly. Interacts with protease NS2. The heterodimer E1/E2 interacts with host CLDN1; this interaction plays a role in viral entry into host cell. Part of the viral assembly initiation complex composed of NS2, E1, E2, NS3, NS4A, NS5A and the mature core protein. Interacts with host SLC3A2/4F2hc; the interaction may facilitate viral entry into host cell. Interacts with human PLSCR1. As to quaternary structure, homohexamer. Homoheptamer. Interacts with protease NS2. In terms of assembly, homodimer. Interacts with host SPCS1; this interaction is essential for viral particle assembly. Interacts with envelope glycoprotein E1. Interacts with envelope glycoprotein E2. Interacts with viroporin p7. Interacts with serine protease/helicase NS3. Part of the replication complex composed of NS2, NS3, NS4A, NS4B, NS5A and the RNA-directed RNA polymerase embedded in an ER-derived membranous web. Part of the viral assembly initiation complex composed of NS2, E1, E2, NS3, NS4A, NS5A and the mature core protein. Interacts with protease NS2. Interacts with non-structural protein 4A; this interaction stabilizes the folding of NS3 serine protease. NS3-NS4A interaction is essential for NS3 activation and allows membrane anchorage of the latter. NS3/NS4A complex also prevents phosphorylation of host IRF3, thus preventing the establishment of dsRNA induced antiviral state. Interacts with host MAVS; this interaction leads to the cleavage and inhibition of host MAVS. Interacts with host TICAM1; this interaction leads to the cleavage and inhibition of host TICAM1. Interacts with host TANK-binding kinase/TBK1; this interaction results in the inhibition of the association between TBK1 and IRF3, which leads to the inhibition of IRF3 activation. Interacts with host RBM24. Part of the replication complex composed of NS2, NS3, NS4A, NS4B, NS5A and the RNA-directed RNA polymerase embedded in an ER-derived membranous web. Part of the viral assembly initiation complex composed of NS2, E1, E2, NS3, NS4A, NS5A and the mature core protein. As to quaternary structure, interacts with NS3 serine protease; this interaction stabilizes the folding of NS3 serine protease. NS3-NS4A interaction is essential for NS3 activation and allows membrane anchorage of the latter. Interacts with non-structural protein 5A (via N-terminus). Part of the replication complex composed of NS2, NS3, NS4A, NS4B, NS5A and the RNA-directed RNA polymerase embedded in an ER-derived membranous web. Part of the viral assembly initiation complex composed of NS2, E1, E2, NS3, NS4A, NS5A and the mature core protein. In terms of assembly, homomultimer. Interacts with non-structural protein NS5A. Interacts with host PLA2G4C; this interaction likely initiates the recruitment of replication complexes to lipid droplets. Interacts with host STING; this interaction disrupts the interaction between STING and TBK1 thereby suppressing the interferon signaling. Part of the replication complex composed of NS2, NS3, NS4A, NS4B, NS5A and the RNA-directed RNA polymerase embedded in an ER-derived membranous web. Monomer. Homodimer; dimerization is required for RNA-binding. Interacts with the mature core protein. Interacts (via N-terminus) with non-structural protein 4A. Interacts with non-structural protein 4B. Interacts (via region D2) with RNA-directed RNA polymerase. Part of the viral assembly initiation complex composed of NS2, E1, E2, NS3, NS4A, NS5A and the mature core protein. Part of the replication complex composed of NS2, NS3, NS4A, NS4B, NS5A and the RNA-directed RNA polymerase embedded in an ER-derived membranous web. Interacts with host GRB2. Interacts with host BIN1. Interacts with host PIK3R1. Interacts with host SRCAP. Interacts with host FKBP8. Interacts (via C-terminus) with host VAPB (via MSP domain). Interacts with host EIF2AK2/PKR; this interaction leads to disruption of EIF2AK2 dimerization by NS5A and probably allows the virus to evade the innate immune response. Interacts (via N-terminus) with host PACSIN2 (via N-terminus); this interaction attenuates protein kinase C alpha-mediated phosphorylation of PACSIN2 by disrupting the interaction between PACSIN2 and PRKCA. Interacts (via N-terminus) with host SRC kinase (via SH2 domain). Interacts with most Src-family kinases. Interacts with host IFI27 and SKP2; promotes the ubiquitin-mediated proteasomal degradation of NS5A. Interacts with host GPS2. Interacts with host TNFRSF21; this interaction allows the modulation by the virus of JNK, p38 MAPK, STAT3, and Akt signaling pathways in a DR6-dependent manner. Interacts (via N-terminus) with host CIDEB (via N-terminus); this interaction seems to regulate the association of HCV particles with APOE. Interacts with host CHKA/Choline Kinase-alpha; CHKA bridges host PI4KA and NS5A and potentiates NS5A-stimulated PI4KA activity, which then facilitates the targeting of the ternary complex to the ER for viral replication. Interacts with host SPSB2 (via C-terminus); this interaction targets NS5A for ubiquitination and degradation. Interacts with host RAB18; this interaction may promote the association of NS5A and other replicase components with lipid droplets. Interacts (via region D2) with host PPIA/CYPA; the interaction stimulates RNA-binding ability of NS5A and is dependent on the peptidyl-prolyl cis-trans isomerase activity of PPIA/CYPA. Interacts with host TRIM14; this interaction induces the degradation of NS5A. As to quaternary structure, homooligomer. Interacts with non-structural protein 5A. Interacts with host VAPB. Interacts with host PRK2/PKN2. Interacts with host HNRNPA1 and SEPT6; these interactions facilitate viral replication. Part of the replication complex composed of NS2, NS3, NS4A, NS4B, NS5A and the RNA-directed RNA polymerase. It depends on Zn(2+) as a cofactor. Requires Mg(2+) as cofactor. Post-translationally, specific enzymatic cleavages in vivo yield mature proteins. The structural proteins, core, E1, E2 and p7 are produced by proteolytic processing by host signal peptidases. The core protein precursor is synthesized as a 23 kDa, which is retained in the ER membrane through the hydrophobic signal peptide. Cleavage by the signal peptidase releases the 21 kDa mature core protein. The cleavage of the core protein precursor occurs between aminoacids 176 and 188 but the exact cleavage site is not known. Some degraded forms of the core protein appear as well during the course of infection. The other proteins (p7, NS2, NS3, NS4A, NS4B, NS5A and NS5B) are cleaved by the viral proteases. Autoprocessing between NS2 and NS3 is mediated by the NS2 cysteine protease catalytic domain and regulated by the NS3 N-terminal domain. Phosphorylated by host PKC and PKA. In terms of processing, ubiquitinated; mediated by UBE3A and leading to core protein subsequent proteasomal degradation. Post-translationally, highly N-glycosylated. Palmitoylation is required for NS2/3 autoprocessing and E2 recruitment to membranes. In terms of processing, palmitoylated. This modification may play a role in its polymerization or in protein-protein interactions. Post-translationally, phosphorylated on serines in a basal form termed p56. p58 is a hyperphosphorylated form of p56. p56 and p58 coexist in the cell in roughly equivalent amounts. Hyperphosphorylation is dependent on the presence of NS4A. Host CSNK1A1/CKI-alpha or RPS6KB1 kinases may be responsible for NS5A phosphorylation. Tyrosine phosphorylation is essential for the interaction with host SRC. In terms of processing, the N-terminus is phosphorylated by host PRK2/PKN2.

The protein localises to the host endoplasmic reticulum membrane. It is found in the host mitochondrion membrane. It localises to the virion. Its subcellular location is the host cytoplasm. The protein resides in the host nucleus. The protein localises to the host lipid droplet. It is found in the virion membrane. It localises to the host mitochondrion. Its subcellular location is the host cell membrane. The protein resides in the host perinuclear region. It catalyses the reaction Hydrolysis of four peptide bonds in the viral precursor polyprotein, commonly with Asp or Glu in the P6 position, Cys or Thr in P1 and Ser or Ala in P1'.. The enzyme catalyses a ribonucleoside 5'-triphosphate + H2O = a ribonucleoside 5'-diphosphate + phosphate + H(+). It carries out the reaction ATP + H2O = ADP + phosphate + H(+). The catalysed reaction is RNA(n) + a ribonucleoside 5'-triphosphate = RNA(n+1) + diphosphate. Its activity is regulated as follows. Inhibited by the antiviral drug hexamethylene amiloride. Inhibited by amantadine. Inhibition by amantadine appears to be genotype-dependent. Also inhibited by long-alkyl-chain iminosugar derivatives. Activity is up-regulated by PRK2/PKN2-mediated phosphorylation. In terms of biological role, packages viral RNA to form a viral nucleocapsid, and promotes virion budding. Participates in the viral particle production as a result of its interaction with the non-structural protein 5A. Binds RNA and may function as a RNA chaperone to induce the RNA structural rearrangements taking place during virus replication. Modulates viral translation initiation by interacting with viral IRES and 40S ribosomal subunit. Affects various cell signaling pathways, host immunity and lipid metabolism. Prevents the establishment of cellular antiviral state by blocking the interferon-alpha/beta (IFN-alpha/beta) and IFN-gamma signaling pathways and by blocking the formation of phosphorylated STAT1 and promoting ubiquitin-mediated proteasome-dependent degradation of STAT1. Activates STAT3 leading to cellular transformation. Regulates the activity of cellular genes, including c-myc and c-fos. May repress the promoter of p53, and sequester CREB3 and SP110 isoform 3/Sp110b in the cytoplasm. Represses cell cycle negative regulating factor CDKN1A, thereby interrupting an important check point of normal cell cycle regulation. Targets transcription factors involved in the regulation of inflammatory responses and in the immune response: suppresses TNF-induced NF-kappa-B activation, and activates AP-1. Binds to dendritic cells (DCs) via C1QR1, resulting in down-regulation of T-lymphocytes proliferation. Alters lipid metabolism by interacting with hepatocellular proteins involved in lipid accumulation and storage. Induces up-regulation of FAS promoter activity, and thereby contributes to the increased triglyceride accumulation in hepatocytes (steatosis). Functionally, forms a heterodimer with envelope glycoprotein E2, which mediates virus attachment to the host cell, virion internalization through clathrin-dependent endocytosis and fusion with host membrane. Fusion with the host cell is most likely mediated by both E1 and E2, through conformational rearrangements of the heterodimer required for fusion rather than a classical class II fusion mechanism. E1/E2 heterodimer binds host apolipoproteins such as APOB and APOE thereby forming a lipo-viro-particle (LVP). APOE associated to the LVP allows the initial virus attachment to cell surface receptors such as the heparan sulfate proteoglycans (HSPGs), syndecan-1 (SDC1), syndecan-1 (SDC2), the low-density lipoprotein receptor (LDLR) and scavenger receptor class B type I (SCARB1). The cholesterol transfer activity of SCARB1 allows E2 exposure and binding of E2 to SCARB1 and the tetraspanin CD81. E1/E2 heterodimer binding on CD81 activates the epithelial growth factor receptor (EGFR) signaling pathway. Diffusion of the complex E1-E2-EGFR-SCARB1-CD81 to the cell lateral membrane allows further interaction with Claudin 1 (CLDN1) and occludin (OCLN) to finally trigger HCV entry. Its function is as follows. Forms a heterodimer with envelope glycoprotein E1, which mediates virus attachment to the host cell, virion internalization through clathrin-dependent endocytosis and fusion with host membrane. Fusion with the host cell is most likely mediated by both E1 and E2, through conformational rearrangements of the heterodimer required for fusion rather than a classical class II fusion mechanism. The interaction between envelope glycoprotein E2 and host apolipoprotein E/APOE allows the proper assembly, maturation and infectivity of the viral particles. This interaction is probably promoted via the up-regulation of cellular autophagy by the virus. E1/E2 heterodimer binds host apolipoproteins such as APOB and APOE thereby forming a lipo-viro-particle (LVP). APOE associated to the LVP allows the initial virus attachment to cell surface receptors such as the heparan sulfate proteoglycans (HSPGs), syndecan-1 (SDC1), syndecan-1 (SDC2), the low-density lipoprotein receptor (LDLR) and scavenger receptor class B type I (SCARB1). The cholesterol transfer activity of SCARB1 allows E2 exposure and binding of E2 to SCARB1 and the tetraspanin CD81. E1/E2 heterodimer binding on CD81 activates the epithelial growth factor receptor (EGFR) signaling pathway. Diffusion of the complex E1-E2-EGFR-SCARB1-CD81 to the cell lateral membrane allows further interaction with Claudin 1 (CLDN1) and occludin (OCLN) to finally trigger HCV entry. Inhibits host EIF2AK2/PKR activation, preventing the establishment of an antiviral state. Viral ligand for CD209/DC-SIGN and CLEC4M/DC-SIGNR, which are respectively found on dendritic cells (DCs), and on liver sinusoidal endothelial cells and macrophage-like cells of lymph node sinuses. These interactions allow the capture of circulating HCV particles by these cells and subsequent transmission to permissive cells. Capture of circulating HCV particles by these SIGN+ cells may facilitate virus infection of proximal hepatocytes and lymphocyte subpopulations and may be essential for the establishment of persistent infection. Ion channel protein that acts as a viroporin and plays an essential role in the assembly, envelopment and secretion of viral particles. Regulates the host cell secretory pathway, which induces the intracellular retention of viral glycoproteins and favors assembly of viral particles. Creates a pore in acidic organelles and releases Ca(2+) and H(+) in the cytoplasm of infected cells, leading to a productive viral infection. High levels of cytoplasmic Ca(2+) may trigger membrane trafficking and transport of viral ER-associated proteins to viroplasms, sites of viral genome replication. This ionic imbalance induces the assembly of the inflammasome complex, which triggers the maturation of pro-IL-1beta into IL-1beta through the action of caspase-1. Targets also host mitochondria and induces mitochondrial depolarization. In addition of its role as a viroporin, acts as a lipid raft adhesion factor. In terms of biological role, cysteine protease required for the proteolytic auto-cleavage between the non-structural proteins NS2 and NS3. The N-terminus of NS3 is required for the function of NS2 protease (active region NS2-3). Promotes the initiation of viral particle assembly by mediating the interaction between structural and non-structural proteins. Functionally, displays three enzymatic activities: serine protease with a chymotrypsin-like fold, NTPase and RNA helicase. NS3 serine protease, in association with NS4A, is responsible for the cleavages of NS3-NS4A, NS4A-NS4B, NS4B-NS5A and NS5A-NS5B. The NS3/NS4A complex prevents phosphorylation of host IRF3, thus preventing the establishment of dsRNA induced antiviral state. The NS3/NS4A complex induces host amino acid transporter component SLC3A2, thus contributing to HCV propagation. NS3 RNA helicase binds to RNA and unwinds both dsDNA and dsRNA in the 3' to 5' direction, and likely resolves RNA complicated stable secondary structures in the template strand. Binds a single ATP and catalyzes the unzipping of a single base pair of dsRNA. Inhibits host antiviral proteins TBK1 and IRF3 thereby preventing the establishment of an antiviral state. Cleaves host MAVS/CARDIF thereby preventing the establishment of an antiviral state. Cleaves host TICAM1/TRIF, thereby disrupting TLR3 signaling and preventing the establishment of an antiviral state. Its function is as follows. Induces a specific membrane alteration that serves as a scaffold for the virus replication complex. This membrane alteration gives rise to the so-called ER-derived membranous web that contains the replication complex. NS4B self-interaction contributes to its function in membranous web formation. Promotes host TRIF protein degradation in a CASP8-dependent manner thereby inhibiting host TLR3-mediated interferon signaling. Disrupts the interaction between STING and TBK1 contributing to the inhibition of interferon signaling. Phosphorylated protein that is indispensable for viral replication and assembly. Both hypo- and hyperphosphorylated states are required for the viral life cycle. The hyperphosphorylated form of NS5A is an inhibitor of viral replication. Involved in RNA-binding and especially in binding to the viral genome. Zinc is essential for RNA-binding. Participates in the viral particle production as a result of its interaction with the mature viral core protein. Its interaction with host VAPB may target the viral replication complex to vesicles. Down-regulates viral IRES translation initiation. Mediates interferon resistance, presumably by interacting with and inhibiting host EIF2AK2/PKR. Prevents BIN1-induced apoptosis. Acts as a transcriptional activator of some host genes important for viral replication when localized in the nucleus. Via the interaction with host PACSIN2, modulates lipid droplet formation in order to promote virion assembly. Modulates TNFRSF21/DR6 signaling pathway for viral propagation. In terms of biological role, RNA-dependent RNA polymerase that performs primer-template recognition and RNA synthesis during viral replication. Initiates RNA transcription/replication at a flavin adenine dinucleotide (FAD), resulting in a 5'- FAD cap on viral RNAs. In this way, recognition of viral 5' RNA by host pattern recognition receptors can be bypassed, thereby evading activation of antiviral pathways. The protein is Genome polyprotein of Hepatitis C virus genotype 1b (strain HC-J4) (HCV).